Here is a 367-residue protein sequence, read N- to C-terminus: uncharacterized protein (367 aa).

The chain crosses the membrane as a helical span at residues 8-28; it reads VLIGTFVLAAILAVFGFIYWL.

The protein localises to the membrane. This is an uncharacterized protein from Bradyrhizobium diazoefficiens (strain JCM 10833 / BCRC 13528 / IAM 13628 / NBRC 14792 / USDA 110).